The following is a 137-amino-acid chain: MSTEDLYQDDVESLEDYDDETAEQEHEHEHEQQWAEPDDESEYAEAEPDDDEQEEQEEQQAPSGLDSLALDLTLRCGELRLTLAELRRLDAGTILEVGGVAPGYATLCHGERVVAEGELVDVDGRLGLQITRLAAQP.

Over residues 1–22 (MSTEDLYQDDVESLEDYDDETA) the composition is skewed to acidic residues. The tract at residues 1 to 67 (MSTEDLYQDD…EQQAPSGLDS (67 aa)) is disordered. A compositionally biased stretch (basic and acidic residues) spans 23-33 (EQEHEHEHEQQ). Residues 36-58 (EPDDESEYAEAEPDDDEQEEQEE) are compositionally biased toward acidic residues.

Belongs to the FliN/MopA/SpaO family. Homotetramer. The four monomers assemble into two tightly bound homodimers. Interacts with HrcQa.

It localises to the cytoplasm. Component of the type III secretion system, which is required for effector protein delivery, parasitism, and pathogenicity. Probably participates in the formation of a C-ring-like assembly along with HrcQa. This chain is Type III secretion protein HrcQb (hrcQb), found in Pseudomonas syringae pv. tomato (strain ATCC BAA-871 / DC3000).